Consider the following 74-residue polypeptide: Heat shock factor-binding protein 1-like protein 1 (74 aa).

Residues 12–65 adopt a coiled-coil conformation; that stretch reads RALRDAAENLFQELQEHFQALTATLNLRMEEMGNRIEDLQKNVKDLMVQAGIEN.

Belongs to the HSBP1 family.

The protein is Heat shock factor-binding protein 1-like protein 1 (HSBP1L1) of Homo sapiens (Human).